The following is a 597-amino-acid chain: tRNA uridine 5-carboxymethylaminomethyl modification enzyme MnmG (597 aa).

Residue 11–16 (GAGHAG) participates in FAD binding. An NAD(+)-binding site is contributed by 275–289 (SPRYCPSIEEKIERY).

Belongs to the MnmG family. Homodimer. Heterotetramer of two MnmE and two MnmG subunits. FAD is required as a cofactor.

It is found in the cytoplasm. Functionally, NAD-binding protein involved in the addition of a carboxymethylaminomethyl (cmnm) group at the wobble position (U34) of certain tRNAs, forming tRNA-cmnm(5)s(2)U34. In Endomicrobium trichonymphae, this protein is tRNA uridine 5-carboxymethylaminomethyl modification enzyme MnmG.